A 165-amino-acid chain; its full sequence is Chaperone protein SicA (165 aa).

The protein belongs to the LcrH/SycD chaperone family. Dimer or higher-order oligomers.

Its subcellular location is the cytoplasm. Functionally, type III secretion-associated chaperone required for SipB and SipC stabilization. Prevents premature association of SipB with SipC, which may lead to their targeting for degradation. Along with InvF, required for transcription activation of sigDE (sopB pipC), sicAsipBCDA, and sopE. The sequence is that of Chaperone protein SicA (sicA) from Salmonella dublin.